Consider the following 406-residue polypeptide: 2,3-bisphosphoglycerate-independent phosphoglycerate mutase (406 aa).

The protein belongs to the BPG-independent phosphoglycerate mutase family. A-PGAM subfamily.

It catalyses the reaction (2R)-2-phosphoglycerate = (2R)-3-phosphoglycerate. It participates in carbohydrate degradation; glycolysis; pyruvate from D-glyceraldehyde 3-phosphate: step 3/5. Functionally, catalyzes the interconversion of 2-phosphoglycerate and 3-phosphoglycerate. The chain is 2,3-bisphosphoglycerate-independent phosphoglycerate mutase from Methanococcus maripaludis (strain C5 / ATCC BAA-1333).